Reading from the N-terminus, the 261-residue chain is Short-chain dehydrogenase/reductase AFUA_1G00990 (261 aa).

Positions 19, 67, 94, 169, 173, and 213 each coordinate NADP(+). Y169 acts as the Proton donor in catalysis. Catalysis depends on K173, which acts as the Lowers pKa of active site Tyr.

The protein belongs to the short-chain dehydrogenases/reductases (SDR) family.

Functionally, short-chain dehydrogenase/reductase; part of the gene cluster that mediates the biosynthesis of fumigermin that inhibits germination of spores of the inducing S.rapamycinicus, and thus helps the fungus to defend resources in the shared habitat against a bacterial competitor. The partially reducing polyketide synthase fngA alone is sufficient for the production of fumigermin. FgnA catalyzes the condensation of 3 malonyl-CoA units to an acetyl-CoA starter, and 3 methylations to yield fumigermin. It is remarkable that the five cluster genes including fgnA are conserved in distantly related fungi, supporting the assumption of a fumigermin cluster; it is thus possible that originally all five genes were functional, but that the genes encoding tailoring enzymes became inactive from mutations, similar to the case of the fgnA gene in strains A1163 and Af293. The polypeptide is Short-chain dehydrogenase/reductase AFUA_1G00990 (Aspergillus fumigatus (strain ATCC MYA-4609 / CBS 101355 / FGSC A1100 / Af293) (Neosartorya fumigata)).